The chain runs to 44 residues: DNA-directed RNA polymerase subunit Rpo12 (44 aa).

C8, C22, and C25 together coordinate Zn(2+).

This sequence belongs to the archaeal Rpo12/eukaryotic RPC10 RNA polymerase subunit family. In terms of assembly, part of the RNA polymerase complex. It depends on Zn(2+) as a cofactor.

The protein resides in the cytoplasm. The enzyme catalyses RNA(n) + a ribonucleoside 5'-triphosphate = RNA(n+1) + diphosphate. DNA-dependent RNA polymerase (RNAP) catalyzes the transcription of DNA into RNA using the four ribonucleoside triphosphates as substrates. The chain is DNA-directed RNA polymerase subunit Rpo12 from Natronomonas pharaonis (strain ATCC 35678 / DSM 2160 / CIP 103997 / JCM 8858 / NBRC 14720 / NCIMB 2260 / Gabara) (Halobacterium pharaonis).